The primary structure comprises 217 residues: Translation initiation factor 6 (217 aa).

Belongs to the eIF-6 family.

Binds to the 50S ribosomal subunit and prevents its association with the 30S ribosomal subunit to form the 70S initiation complex. The protein is Translation initiation factor 6 of Methanococcoides burtonii (strain DSM 6242 / NBRC 107633 / OCM 468 / ACE-M).